The primary structure comprises 330 residues: G-protein coupled receptor 74 (330 aa).

A run of 7 helical transmembrane segments spans residues 50 to 70 (LIVV…NLWL), 85 to 105 (FILI…IFSI), 121 to 141 (MVVF…LCFD), 160 to 180 (WVFC…QKAL), 210 to 230 (VAVS…CIFY), 252 to 272 (MLLF…LSFI), and 295 to 315 (LPLL…IYIL). A disulfide bond links C117 and C195.

Belongs to the G-protein coupled receptor 1 family.

It is found in the host membrane. This chain is G-protein coupled receptor 74 (74), found in Equus caballus (Horse).